The primary structure comprises 186 residues: Adenine phosphoribosyltransferase (186 aa).

The protein belongs to the purine/pyrimidine phosphoribosyltransferase family. In terms of assembly, homodimer.

The protein resides in the cytoplasm. It catalyses the reaction AMP + diphosphate = 5-phospho-alpha-D-ribose 1-diphosphate + adenine. Its pathway is purine metabolism; AMP biosynthesis via salvage pathway; AMP from adenine: step 1/1. Functionally, catalyzes a salvage reaction resulting in the formation of AMP, that is energically less costly than de novo synthesis. The polypeptide is Adenine phosphoribosyltransferase (Sulfurovum sp. (strain NBC37-1)).